The following is a 251-amino-acid chain: Zwei Ig domain protein zig-3 (251 aa).

The signal sequence occupies residues 1 to 19 (MLLICISVLAAISAHPLSS). 2 consecutive Ig-like C2-type domains span residues 42 to 144 (PSLK…AKIS) and 160 to 244 (PVIT…TFLY). 2 cysteine pairs are disulfide-bonded: Cys-65/Cys-128 and Cys-181/Cys-228.

In terms of tissue distribution, expressed in PVT, AIM and ASI neurons, in vulva and weakly in body wall muscles.

The protein resides in the secreted. Functionally, required for maintaining axon position of PVQ and PVP neurons postembryonically in the ventral nerve cord (VNC) by preventing axons drifting into the opposite side of the VNC that could occur during body growth and movement. The protein is Zwei Ig domain protein zig-3 of Caenorhabditis elegans.